Consider the following 409-residue polypeptide: MSATNSASTLITNIGELMTQDMEHRVLKDAAIVIEGERIAWLGSTKDAPAADENIDAQGRAVLPGWVDSHSHLVFAGDRTAEFEARMAGESYSAGGIAVTTGATRSVSDDELTRLVRDRVAEAVSQGTTYLESKTGYGLDVENEARSARIAAAEVDEVTYLGAHLVPDGSDPEEYTDLVCGPMLDAVLPHVRWADVFCERGAFTEDQSRRVLRAARDAGLGLRVHGNQLGEGPGVALAVEFAAASVDHVNYLSDKDVLALAGTWAGWDPATGAGTKGTVATCLPACDLSTRQPLAPGRELIDAGVQIALAANCNPGTSYTSSMAFCVTTAVLQMHLSVHEAVRAATYGGALALGRESGNDVDGERAVGSLAVGHRADLHMLKAPSATHLAYRPGIPLTGSVWRAGVRVV.

Fe(3+)-binding residues include histidine 70 and histidine 72. 2 residues coordinate Zn(2+): histidine 70 and histidine 72. 4-imidazolone-5-propanoate-binding residues include arginine 79, tyrosine 137, and histidine 164. Tyrosine 137 provides a ligand contact to N-formimidoyl-L-glutamate. Histidine 225 provides a ligand contact to Fe(3+). Histidine 225 is a binding site for Zn(2+). Glutamine 228 is a 4-imidazolone-5-propanoate binding site. Residues asparagine 314 and glycine 316 each contribute to the N-formimidoyl-L-glutamate site. Threonine 317 provides a ligand contact to 4-imidazolone-5-propanoate.

The protein belongs to the metallo-dependent hydrolases superfamily. HutI family. Requires Zn(2+) as cofactor. Fe(3+) serves as cofactor.

The protein resides in the cytoplasm. The catalysed reaction is 4-imidazolone-5-propanoate + H2O = N-formimidoyl-L-glutamate. The protein operates within amino-acid degradation; L-histidine degradation into L-glutamate; N-formimidoyl-L-glutamate from L-histidine: step 3/3. Catalyzes the hydrolytic cleavage of the carbon-nitrogen bond in imidazolone-5-propanoate to yield N-formimidoyl-L-glutamate. It is the third step in the universal histidine degradation pathway. In Paenarthrobacter aurescens (strain TC1), this protein is Imidazolonepropionase.